The sequence spans 296 residues: 4-hydroxybenzoate octaprenyltransferase (296 aa).

The next 8 helical transmembrane spans lie at 28 to 48 (PIGI…AAEG), 52 to 72 (LSHV…GCAI), 102 to 122 (ALIL…CTNA), 146 to 166 (YYPQ…TFTA), 169 to 189 (GELP…TVGY), 219 to 239 (VIIL…GARF), 241 to 261 (LGGW…WEFW), and 275 to 295 (FLHN…DYAL).

Belongs to the UbiA prenyltransferase family. Mg(2+) is required as a cofactor.

It is found in the cell inner membrane. It catalyses the reaction all-trans-octaprenyl diphosphate + 4-hydroxybenzoate = 4-hydroxy-3-(all-trans-octaprenyl)benzoate + diphosphate. It participates in cofactor biosynthesis; ubiquinone biosynthesis. In terms of biological role, catalyzes the prenylation of para-hydroxybenzoate (PHB) with an all-trans polyprenyl group. Mediates the second step in the final reaction sequence of ubiquinone-8 (UQ-8) biosynthesis, which is the condensation of the polyisoprenoid side chain with PHB, generating the first membrane-bound Q intermediate 3-octaprenyl-4-hydroxybenzoate. In Pseudomonas fluorescens (strain ATCC BAA-477 / NRRL B-23932 / Pf-5), this protein is 4-hydroxybenzoate octaprenyltransferase.